The primary structure comprises 241 residues: DnaJ homolog subfamily C member 4 (241 aa).

The 66-residue stretch at 34-99 folds into the J domain; it reads TYYELLGVHP…QSRRSYDDQL (66 aa). Basic and acidic residues predominate over residues 88–99; the sequence is REQSRRSYDDQL. The interval 88–129 is disordered; it reads REQSRRSYDDQLRSGSPPKSPRTTVHDKSAHQTHSSWTPPNA. A compositionally biased stretch (polar residues) spans 119-129; the sequence is QTHSSWTPPNA. Residues 156–175 form a helical membrane-spanning segment; sequence VLGYCLLLMLAGMGLHYIAF. The tract at residues 212–241 is disordered; it reads QQERQRLGQRQPPPSEPTQGPEIVPRGAGP.

It localises to the membrane. The sequence is that of DnaJ homolog subfamily C member 4 (DNAJC4) from Homo sapiens (Human).